A 191-amino-acid polypeptide reads, in one-letter code: uncharacterized protein (191 aa).

The next 5 helical transmembrane spans lie at 24–44 (IVRGLIDGSLSALGVVIGASG), 51–71 (IIAAGLGGGIANGLSNILGAF), 114–134 (LIDGISTTIGSALPVVPFFLF), 139–159 (ALYVAIGITIAILFILGVFIG), and 167–187 (IISGIKMVAGALAVAILCFMI).

The protein resides in the cell membrane. This is an uncharacterized protein from Methanocaldococcus jannaschii (strain ATCC 43067 / DSM 2661 / JAL-1 / JCM 10045 / NBRC 100440) (Methanococcus jannaschii).